The sequence spans 572 residues: Protein misato homolog 1 (572 aa).

The protein belongs to the misato family.

Its subcellular location is the mitochondrion outer membrane. It localises to the cytoplasm. Involved in the regulation of mitochondrial distribution and morphology. Required for mitochondrial fusion and mitochondrial network formation. This is Protein misato homolog 1 (MSTO1) from Bos taurus (Bovine).